Reading from the N-terminus, the 1172-residue chain is Short transient receptor potential channel 2 (1172 aa).

Positions 1-10 (MLMSRTDSKS) are enriched in basic and acidic residues. Disordered stretches follow at residues 1 to 22 (MLMS…MFKD), 69 to 98 (VVDP…WLTN), 140 to 227 (SAAR…GGVQ), and 249 to 271 (ATCG…SESV). The Cytoplasmic portion of the chain corresponds to 1-659 (MLMSRTDSKS…PKSQLGRLLK (659 aa)). The segment covering 75–87 (PGSSGLNQNSTDV) has biased composition (polar residues). Residues 166 to 177 (ESAEPRAEEPNR) are compositionally biased toward basic and acidic residues. Residues 195 to 204 (SLSNSSSQPN) show a composition bias toward polar residues. Positions 206 to 218 (RTGRTRQRQHRPQ) are enriched in basic residues. Residues 261-270 (SPASLSSSES) show a composition bias toward low complexity. ANK repeat units lie at residues 301-330 (KFPP…DASG), 377-406 (QIHE…REKG), and 430-459 (PGVT…TIAR). A helical transmembrane segment spans residues 660–680 (IPVLKFLLHSASYLWFLIFLL). The Extracellular segment spans residues 681-702 (GESLVMETQLSTFKGRSQSVWE). A helical membrane pass occupies residues 703-723 (TSLHMIWVTGFLWFECKEVWI). Residues 724–738 (EGLRSYLLDWWNFLD) lie on the Cytoplasmic side of the membrane. Residues 739-759 (VVILSLYLASFALRLLLAGLA) form a helical membrane-spanning segment. The Extracellular segment spans residues 760–789 (YMHCRDASDSTTCRYFTTAERSEWRTEDPQ). Residues 790–810 (FLAEVLFAVTSMLSFTRLAYI) traverse the membrane as a helical segment. Topologically, residues 811 to 833 (LPAHESLGTLQISIGKMIDDMIR) are cytoplasmic. A helical membrane pass occupies residues 834–854 (FMFILMIILTAFLCGLNNIYV). Over 855–899 (PYQESEKLGNFNETFQFLFWTMFGMEEHTVVDMPQFLVPEFVGRA) the chain is Extracellular. Residues 900–920 (MYGIFTIVMVIVLLNMLIAMI) traverse the membrane as a helical segment. Residues 921 to 1172 (TNSFQKIEDD…EGDLETKGES (252 aa)) lie on the Cytoplasmic side of the membrane. A disordered region spans residues 1118 to 1172 (VSLGDGLDGTGEAGAPAPGEPGSSSSAHVLVHREQEAEGSGDLLLEGDLETKGES). Residues 1130-1144 (AGAPAPGEPGSSSSA) are compositionally biased toward low complexity.

The protein belongs to the transient receptor (TC 1.A.4) family. STrpC subfamily. TRPC2 sub-subfamily. In terms of tissue distribution, isoform 3 is ubiquitously expressed at low levels. Isoform 4 is expressed exclusively in vomeronasal organ.

It is found in the membrane. Its function is as follows. Thought to form a receptor-activated non-selective calcium permeant cation channel. Probably is operated by a phosphatidylinositol second messenger system activated by receptor tyrosine kinases or G-protein coupled receptors. May also be activated by intracellular calcium store depletion. Plays a role in mediating responsivity to pheromones that elicit aggressive and mating behaviors. Required for response to the Esp1 pheromone which enhances female sexual receptive behavior and to the Esp22 pheromone which inhibits adult male mating behavior. The chain is Short transient receptor potential channel 2 (Trpc2) from Mus musculus (Mouse).